Consider the following 745-residue polypeptide: Elongation factor G, mitochondrial (745 aa).

One can recognise a tr-type G domain in the interval 40–317 (ERIRNIGISA…AVLDYLPNPG (278 aa)). Residues 49–56 (AHIDSGKT), 116–120 (DTPGH), and 170–173 (NKLD) each bind GTP.

This sequence belongs to the TRAFAC class translation factor GTPase superfamily. Classic translation factor GTPase family. EF-G/EF-2 subfamily.

It is found in the mitochondrion. It participates in protein biosynthesis; polypeptide chain elongation. Its function is as follows. Mitochondrial GTPase that catalyzes the GTP-dependent ribosomal translocation step during translation elongation. During this step, the ribosome changes from the pre-translocational (PRE) to the post-translocational (POST) state as the newly formed A-site-bound peptidyl-tRNA and P-site-bound deacylated tRNA move to the P and E sites, respectively. Catalyzes the coordinated movement of the two tRNA molecules, the mRNA and conformational changes in the ribosome. Essential during development as it acts as a retrograde signal from mitochondria to the nucleus to slow down cell proliferation if mitochondrial energy output is low. The sequence is that of Elongation factor G, mitochondrial from Drosophila erecta (Fruit fly).